The chain runs to 288 residues: UTP--glucose-1-phosphate uridylyltransferase (288 aa).

It belongs to the UDPGP type 2 family.

The enzyme catalyses alpha-D-glucose 1-phosphate + UTP + H(+) = UDP-alpha-D-glucose + diphosphate. Its pathway is glycolipid metabolism; diglucosyl-diacylglycerol biosynthesis. Functionally, catalyzes the formation of UDP-glucose from glucose-1-phosphate and UTP. This is an intermediate step in the biosynthesis of diglucosyl-diacylglycerol (Glc2-DAG), i.e. a glycolipid found in the membrane, which is also used as a membrane anchor for lipoteichoic acid (LTA). This Staphylococcus epidermidis (strain ATCC 35984 / DSM 28319 / BCRC 17069 / CCUG 31568 / BM 3577 / RP62A) protein is UTP--glucose-1-phosphate uridylyltransferase (gtaB).